A 331-amino-acid polypeptide reads, in one-letter code: Putative T-box protein 36 (331 aa).

The T-box DNA-binding region spans 29–210 (EITKKQWNQL…MNRFSRKRKY (182 aa)).

The protein resides in the nucleus. The polypeptide is Putative T-box protein 36 (tbx-36) (Caenorhabditis elegans).